A 360-amino-acid chain; its full sequence is Phosphoserine aminotransferase (360 aa).

Residue R41 coordinates L-glutamate. Positions 101, 152, 172, and 195 each coordinate pyridoxal 5'-phosphate. K196 bears the N6-(pyridoxal phosphate)lysine mark. Residue 237–238 (NT) participates in pyridoxal 5'-phosphate binding.

This sequence belongs to the class-V pyridoxal-phosphate-dependent aminotransferase family. SerC subfamily. In terms of assembly, homodimer. Requires pyridoxal 5'-phosphate as cofactor.

The protein localises to the cytoplasm. The enzyme catalyses O-phospho-L-serine + 2-oxoglutarate = 3-phosphooxypyruvate + L-glutamate. It carries out the reaction 4-(phosphooxy)-L-threonine + 2-oxoglutarate = (R)-3-hydroxy-2-oxo-4-phosphooxybutanoate + L-glutamate. The protein operates within amino-acid biosynthesis; L-serine biosynthesis; L-serine from 3-phospho-D-glycerate: step 2/3. It functions in the pathway cofactor biosynthesis; pyridoxine 5'-phosphate biosynthesis; pyridoxine 5'-phosphate from D-erythrose 4-phosphate: step 3/5. In terms of biological role, catalyzes the reversible conversion of 3-phosphohydroxypyruvate to phosphoserine and of 3-hydroxy-2-oxo-4-phosphonooxybutanoate to phosphohydroxythreonine. The chain is Phosphoserine aminotransferase from Burkholderia ambifaria (strain ATCC BAA-244 / DSM 16087 / CCUG 44356 / LMG 19182 / AMMD) (Burkholderia cepacia (strain AMMD)).